Consider the following 243-residue polypeptide: 6-carboxyhexanoate--CoA ligase (243 aa).

It belongs to the BioW family. In terms of assembly, homodimer. Mg(2+) is required as a cofactor.

It carries out the reaction heptanedioate + ATP + CoA = 6-carboxyhexanoyl-CoA + AMP + diphosphate. Its pathway is metabolic intermediate metabolism; pimeloyl-CoA biosynthesis; pimeloyl-CoA from pimelate: step 1/1. In terms of biological role, catalyzes the transformation of pimelate into pimeloyl-CoA with concomitant hydrolysis of ATP to AMP. This Corynebacterium pseudotuberculosis (strain FRC41) protein is 6-carboxyhexanoate--CoA ligase.